Consider the following 126-residue polypeptide: Large ribosomal subunit protein uL22 (126 aa).

The protein belongs to the universal ribosomal protein uL22 family. In terms of assembly, part of the 50S ribosomal subunit.

In terms of biological role, this protein binds specifically to 23S rRNA; its binding is stimulated by other ribosomal proteins, e.g. L4, L17, and L20. It is important during the early stages of 50S assembly. It makes multiple contacts with different domains of the 23S rRNA in the assembled 50S subunit and ribosome. Functionally, the globular domain of the protein is located near the polypeptide exit tunnel on the outside of the subunit, while an extended beta-hairpin is found that lines the wall of the exit tunnel in the center of the 70S ribosome. This Zymomonas mobilis subsp. mobilis (strain ATCC 31821 / ZM4 / CP4) protein is Large ribosomal subunit protein uL22.